We begin with the raw amino-acid sequence, 580 residues long: Acyl-coenzyme A synthetase ACSM4, mitochondrial (580 aa).

A mitochondrion-targeting transit peptide spans 1–22 (MKVLLRCQRLRFIWLAKPAGRH). Residues 229-237 (TSGTTGSPK), 368-373 (EGYGQT), D455, R470, and K566 each bind ATP.

This sequence belongs to the ATP-dependent AMP-binding enzyme family. It depends on Mg(2+) as a cofactor. Mn(2+) serves as cofactor. Detected in adult olfactory epithelium.

Its subcellular location is the mitochondrion. It catalyses the reaction a medium-chain fatty acid + ATP + CoA = a medium-chain fatty acyl-CoA + AMP + diphosphate. The catalysed reaction is hexanoate + ATP + CoA = hexanoyl-CoA + AMP + diphosphate. The enzyme catalyses octanoate + ATP + CoA = octanoyl-CoA + AMP + diphosphate. It carries out the reaction decanoate + ATP + CoA = decanoyl-CoA + AMP + diphosphate. It catalyses the reaction dodecanoate + ATP + CoA = dodecanoyl-CoA + AMP + diphosphate. Catalyzes the activation of fatty acids by CoA to produce an acyl-CoA, the first step in fatty acid metabolism. Capable of activating medium-chain fatty acids with a preference for C6-12 fatty acids. This chain is Acyl-coenzyme A synthetase ACSM4, mitochondrial (Acsm4), found in Rattus norvegicus (Rat).